We begin with the raw amino-acid sequence, 222 residues long: Triosephosphate isomerase (222 aa).

9–11 lines the substrate pocket; sequence NLK. Catalysis depends on histidine 93, which acts as the Electrophile. The active-site Proton acceptor is the glutamate 141. Substrate is bound by residues isoleucine 146, glycine 181, and 202–203; that span reads AS.

It belongs to the triosephosphate isomerase family. As to quaternary structure, homotetramer; dimer of dimers.

It is found in the cytoplasm. The catalysed reaction is D-glyceraldehyde 3-phosphate = dihydroxyacetone phosphate. It functions in the pathway carbohydrate biosynthesis; gluconeogenesis. The protein operates within carbohydrate degradation; glycolysis; D-glyceraldehyde 3-phosphate from glycerone phosphate: step 1/1. Its function is as follows. Involved in the gluconeogenesis. Catalyzes stereospecifically the conversion of dihydroxyacetone phosphate (DHAP) to D-glyceraldehyde-3-phosphate (G3P). This chain is Triosephosphate isomerase, found in Methanoculleus marisnigri (strain ATCC 35101 / DSM 1498 / JR1).